Reading from the N-terminus, the 200-residue chain is MSKGAVLIISGPSGCGKSTLTKSLIESIPNVYFSISTTTRPMREGETDGVHYHFVSKEHFLQDIHNNVFLEWAEVHTNFYGTSLKPVQQALEQDKIVLFDVDVQGHHSIKEYFGDFAKSVFITTKNKDILRERLISRQTDDLQTIEFRLIQAHNEMQHIHNFDYLIINDDITTAKEAMVAIARSLKYQQIERLSKIIQKW.

Residues 4–183 enclose the Guanylate kinase-like domain; sequence GAVLIISGPS…AKEAMVAIAR (180 aa). 11-18 provides a ligand contact to ATP; the sequence is GPSGCGKS.

The protein belongs to the guanylate kinase family.

It is found in the cytoplasm. The catalysed reaction is GMP + ATP = GDP + ADP. In terms of biological role, essential for recycling GMP and indirectly, cGMP. The polypeptide is Guanylate kinase (Helicobacter hepaticus (strain ATCC 51449 / 3B1)).